Consider the following 348-residue polypeptide: Glycerol-1-phosphate dehydrogenase [NAD(P)+] (348 aa).

NAD(+) contacts are provided by residues 94-98 and 116-119; these read GKPID and TAAS. D121 is a binding site for substrate. S125 is an NAD(+) binding site. D168 contributes to the substrate binding site. Residues D168 and H248 each coordinate Zn(2+). H252 serves as a coordination point for substrate. Residue H264 participates in Zn(2+) binding.

It belongs to the glycerol-1-phosphate dehydrogenase family. The cofactor is Zn(2+).

Its subcellular location is the cytoplasm. It carries out the reaction sn-glycerol 1-phosphate + NAD(+) = dihydroxyacetone phosphate + NADH + H(+). It catalyses the reaction sn-glycerol 1-phosphate + NADP(+) = dihydroxyacetone phosphate + NADPH + H(+). It participates in membrane lipid metabolism; glycerophospholipid metabolism. Catalyzes the NAD(P)H-dependent reduction of dihydroxyacetonephosphate (DHAP or glycerone phosphate) to glycerol 1-phosphate (G1P). The G1P thus generated is used as the glycerophosphate backbone of phospholipids in the cellular membranes of Archaea. The protein is Glycerol-1-phosphate dehydrogenase [NAD(P)+] of Haloquadratum walsbyi (strain DSM 16790 / HBSQ001).